The chain runs to 148 residues: Protein J1 homolog (148 aa).

It belongs to the chordopoxvirinae J1 family. In terms of assembly, homodimer. Part of a complex composed of A30, G7, F10 kinase, A15, D2, D3, and J1. Interacts with A45.

The protein resides in the virion. It is found in the host cytoplasm. Functionally, late protein which is a part of a large complex required for early virion morphogenesis. This complex participates in the formation of virosomes and the incorporation of virosomal contents into nascent immature virions. J1 protein is required for DNA packaging during immature virions (IV) formation. This Fowlpox virus (strain NVSL) (FPV) protein is Protein J1 homolog.